Here is a 508-residue protein sequence, read N- to C-terminus: Transcription termination factor MTERF4, chloroplastic (508 aa).

A chloroplast-targeting transit peptide spans 1 to 79; that stretch reads MMKSLFLFSA…PSLLDMERGR (79 aa). Over residues 28-49 the composition is skewed to low complexity; the sequence is RLTASASTSASSPPRAGCSRGP. 2 disordered regions span residues 28-69 and 475-508; these read RLTA…LYAR and FDTNTLSERVEDEVEDEDLDEDSDYDSTDDEFIE. Residues 484 to 508 show a composition bias toward acidic residues; it reads VEDEVEDEDLDEDSDYDSTDDEFIE.

It belongs to the mTERF family.

It localises to the plastid. It is found in the chloroplast stroma. Functionally, transcription termination factor required for processing and steady-state levels of plastid transcripts. Required for splicing of the chloroplastic group II intron. Required for the accumulation of 16S and 23S ribosomes. The polypeptide is Transcription termination factor MTERF4, chloroplastic (Oryza sativa subsp. japonica (Rice)).